Reading from the N-terminus, the 397-residue chain is GDP-mannose transporter 1 (397 aa).

The segment at 1–57 (MSKPFVPTPNISRPATPSSLDYGKDEASSTLLRDMGERGDRERKDREERDKKEAMPS) is disordered. Topologically, residues 1–61 (MSKPFVPTPN…KEAMPSGQDQ (61 aa)) are cytoplasmic. The span at 9-19 (PNISRPATPSS) shows a compositional bias: polar residues. Residues 34–54 (DMGERGDRERKDREERDKKEA) show a composition bias toward basic and acidic residues. Residues 62–82 (VLPILSYCAASIMMTVVNKYV) form a helical membrane-spanning segment. The Lumenal portion of the chain corresponds to 83–87 (VSGAN). The N-linked (GlcNAc...) asparagine glycan is linked to Asn87. A helical membrane pass occupies residues 88–108 (FTMTFLLLAIQSSVCVLAVTT). Over 109–124 (VKKLGFISFRDFDKND) the chain is Cytoplasmic. The chain crosses the membrane as a helical span at residues 125-142 (AKAWWPISTLLVAVIYTG). At 143–145 (SKA) the chain is on the lumenal side. The chain crosses the membrane as a helical span at residues 146–168 (LQFLSIPVYTIFKNLTIILIAYG). Topologically, residues 169–174 (EVFMFN) are cytoplasmic. Residues 175–197 (GAVSGLTLCSFALMVGSSIIAAW) traverse the membrane as a helical segment. The Lumenal segment spans residues 198–228 (SDITSVWNKEPELDPITGLEITVGPVSTIGG). Residues 229-249 (LNAGYIWMALNCFVSAAYVLF) traverse the membrane as a helical segment. At 250–272 (MRKRIKVTGFKDWDSMYYNNLLS) the chain is on the cytoplasmic side. Residues 273–293 (IPILVVFSLVIEDWGSESLAL) traverse the membrane as a helical segment. The Lumenal segment spans residues 294–300 (NFPASNR). A helical membrane pass occupies residues 301–321 (VLLLSAMAFSGAAAVFISYST). Topologically, residues 322 to 332 (AWCVRITGSTT) are cytoplasmic. Residues 333-353 (YSMVGALNKLPVAASGILFFG) form a helical membrane-spanning segment. Over 354 to 355 (DP) the chain is Lumenal. A helical transmembrane segment spans residues 356–376 (ANFGNISAIAVGGVAGVVYAV). At 377–397 (AKTNQAKVEKARQARAAGGRP) the chain is on the cytoplasmic side.

It belongs to the TPT transporter family. SLC35D subfamily. Homooligomer.

The protein localises to the golgi apparatus membrane. Its subcellular location is the cytoplasmic vesicle membrane. It localises to the endoplasmic reticulum membrane. Functionally, involved in the import of GDP-mannose from the cytoplasm into the Golgi lumen. Involved in capsule synthesis. This is GDP-mannose transporter 1 (GMT1) from Cryptococcus neoformans var. neoformans serotype D (strain B-3501A) (Filobasidiella neoformans).